A 443-amino-acid polypeptide reads, in one-letter code: 5-methylthioadenosine/S-adenosylhomocysteine deaminase (443 aa).

Residues histidine 74 and histidine 76 each contribute to the Zn(2+) site. Substrate-binding residues include glutamate 103 and histidine 196. Histidine 223 is a Zn(2+) binding site. Residues glutamate 226 and aspartate 311 each contribute to the substrate site. Aspartate 311 serves as a coordination point for Zn(2+).

This sequence belongs to the metallo-dependent hydrolases superfamily. MTA/SAH deaminase family. The cofactor is Zn(2+).

It carries out the reaction S-adenosyl-L-homocysteine + H2O + H(+) = S-inosyl-L-homocysteine + NH4(+). It catalyses the reaction S-methyl-5'-thioadenosine + H2O + H(+) = S-methyl-5'-thioinosine + NH4(+). In terms of biological role, catalyzes the deamination of 5-methylthioadenosine and S-adenosyl-L-homocysteine into 5-methylthioinosine and S-inosyl-L-homocysteine, respectively. Is also able to deaminate adenosine. This chain is 5-methylthioadenosine/S-adenosylhomocysteine deaminase, found in Haloquadratum walsbyi (strain DSM 16790 / HBSQ001).